The sequence spans 520 residues: GMP synthase [glutamine-hydrolyzing] (520 aa).

The 194-residue stretch at 9–202 (SVLIIDFGSQ…VHNIAGITGD (194 aa)) folds into the Glutamine amidotransferase type-1 domain. The active-site Nucleophile is cysteine 86. Residues histidine 176 and glutamate 178 contribute to the active site. Residues 203–395 (WSMSAYRAKA…LGLPDSFIGR (193 aa)) form the GMPS ATP-PPase domain. ATP is bound at residue 230–236 (SGGVDSS).

As to quaternary structure, homodimer.

It carries out the reaction XMP + L-glutamine + ATP + H2O = GMP + L-glutamate + AMP + diphosphate + 2 H(+). It functions in the pathway purine metabolism; GMP biosynthesis; GMP from XMP (L-Gln route): step 1/1. Its function is as follows. Catalyzes the synthesis of GMP from XMP. The polypeptide is GMP synthase [glutamine-hydrolyzing] (Allorhizobium ampelinum (strain ATCC BAA-846 / DSM 112012 / S4) (Agrobacterium vitis (strain S4))).